The sequence spans 223 residues: Leucyl/phenylalanyl-tRNA--protein transferase (223 aa).

It belongs to the L/F-transferase family.

Its subcellular location is the cytoplasm. The enzyme catalyses N-terminal L-lysyl-[protein] + L-leucyl-tRNA(Leu) = N-terminal L-leucyl-L-lysyl-[protein] + tRNA(Leu) + H(+). It carries out the reaction N-terminal L-arginyl-[protein] + L-leucyl-tRNA(Leu) = N-terminal L-leucyl-L-arginyl-[protein] + tRNA(Leu) + H(+). It catalyses the reaction L-phenylalanyl-tRNA(Phe) + an N-terminal L-alpha-aminoacyl-[protein] = an N-terminal L-phenylalanyl-L-alpha-aminoacyl-[protein] + tRNA(Phe). Functions in the N-end rule pathway of protein degradation where it conjugates Leu, Phe and, less efficiently, Met from aminoacyl-tRNAs to the N-termini of proteins containing an N-terminal arginine or lysine. The protein is Leucyl/phenylalanyl-tRNA--protein transferase of Dinoroseobacter shibae (strain DSM 16493 / NCIMB 14021 / DFL 12).